Here is a 554-residue protein sequence, read N- to C-terminus: RecBCD enzyme subunit RecD (554 aa).

155-162 (GGPGTGKT) contributes to the ATP binding site.

It belongs to the RecD family. Heterotrimer of RecB, RecC and RecD. All subunits contribute to DNA-binding.

The catalysed reaction is Couples ATP hydrolysis with the unwinding of duplex DNA at the replication fork by translocating in the 5'-3' direction. This creates two antiparallel DNA single strands (ssDNA). The leading ssDNA polymer is the template for DNA polymerase III holoenzyme which synthesizes a continuous strand.. It carries out the reaction ATP + H2O = ADP + phosphate + H(+). In terms of biological role, a helicase/nuclease that prepares dsDNA breaks (DSB) for recombinational DNA repair. Binds to DSBs and unwinds DNA via a highly rapid and processive ATP-dependent bidirectional helicase activity. Holoenzyme degrades any linearized DNA that is unable to undergo homologous recombination. In the holoenzyme this subunit has ssDNA-dependent ATPase and 5'-3' helicase activity. When added to pre-assembled RecBC greatly stimulates nuclease activity and augments holoenzyme processivity. Unlike the case in E.coli, suppresses RecA-dependent homologous recombination, is instead required for single-strand annealing pathway repair of DSB. The chain is RecBCD enzyme subunit RecD from Mycolicibacterium smegmatis (strain ATCC 700084 / mc(2)155) (Mycobacterium smegmatis).